Consider the following 222-residue polypeptide: IVGGKDAPVGKYPYQVSLRLSGSHRCGASILDNNNVLTAAHCVDGLSNLNRLKVHVGTNYLSESGDVYDVEDAVVNKNYDDFLLRNDVALVHLTNPIKFNDLVQPIKLSTNDEDLESNPCTLTGWGSTRLGGNTPNALQEIELIVHPQKQCERDQWRVIDSHICTLTKRGEGACHGDSGGPLVANGAQIGIVSFGSPCALGEPDVYTRVSSFVSWINANLKK.

A Peptidase S1 domain is found at 1-221; that stretch reads IVGGKDAPVG…FVSWINANLK (221 aa). Cysteines 26 and 42 form a disulfide. Catalysis depends on charge relay system residues H41 and D87. 2 disulfide bridges follow: C151–C164 and C174–C198. S178 serves as the catalytic Charge relay system.

Belongs to the peptidase S1 family.

It localises to the secreted. The protein localises to the extracellular space. The catalysed reaction is Preferential cleavage: Tyr-|-Xaa, Trp-|-Xaa, Phe-|-Xaa, Leu-|-Xaa.. The protein is Chymotrypsin-1 of Solenopsis invicta (Red imported fire ant).